The chain runs to 1364 residues: Collagen alpha-2(I) chain (1364 aa).

The first 22 residues, methionine 1–cysteine 22, serve as a signal peptide directing secretion. Pyrrolidone carboxylic acid is present on glutamine 23. A propeptide spans glutamine 23–alanine 79 (N-terminal propeptide). The disordered stretch occupies residues glutamine 26–proline 1128. Over residues proline 34–arginine 44 the composition is skewed to basic and acidic residues. The segment covering proline 59–proline 71 has biased composition (pro residues). The residue at position 80 (glutamine 80) is a Pyrrolidone carboxylic acid. Position 84 is an allysine (lysine 84). The span at leucine 93–arginine 130 shows a compositional bias: low complexity. Residues proline 100, proline 106, proline 115, proline 118, proline 121, proline 133, proline 136, proline 145, proline 151, proline 166, proline 169, and proline 172 each carry the 4-hydroxyproline modification. Positions alanine 139–glutamate 153 are enriched in basic and acidic residues. At lysine 175 the chain carries 5-hydroxylysine; alternate. An O-linked (Gal...) hydroxylysine; alternate glycan is attached at lysine 175. 2 positions are modified to 4-hydroxyproline: proline 190 and proline 193. Position 196 is a 5-hydroxylysine (lysine 196). 4-hydroxyproline occurs at positions 199, 202, 208, 217, 226, 253, 256, and 259. The segment covering valine 223–proline 252 has biased composition (low complexity). Lysine 262 carries the post-translational modification 5-hydroxylysine. Residues proline 271, proline 286, proline 295, and proline 304 each carry the 4-hydroxyproline modification. The segment covering alanine 277–proline 291 has biased composition (low complexity). Over residues proline 298–proline 319 the composition is skewed to low complexity. Lysine 307 carries the 5-hydroxylysine modification. 4-hydroxyproline occurs at positions 313, 319, 322, 328, and 346. The span at proline 328–valine 343 shows a compositional bias: low complexity. Lysine 352 bears the 5-hydroxylysine mark. Proline 361, proline 367, proline 370, proline 391, proline 394, proline 400, proline 406, proline 439, and proline 442 each carry 4-hydroxyproline. Residues leucine 396 to proline 406 show a composition bias toward low complexity. 2 stretches are compositionally biased toward low complexity: residues leucine 468–proline 487 and alanine 511–glutamine 535. Residues glycine 536–glycine 545 show a composition bias toward gly residues. 4 stretches are compositionally biased toward low complexity: residues proline 592 to proline 609, glutamate 621 to arginine 643, serine 666 to asparagine 688, and valine 715 to alanine 735. Basic and acidic residues predominate over residues lysine 736–lysine 745. Residues asparagine 748–serine 763 are compositionally biased toward low complexity. Positions glycine 773–glycine 782 are enriched in gly residues. Low complexity-rich tracts occupy residues alanine 783–threonine 793, proline 861–proline 874, glutamate 891–asparagine 930, tyrosine 948–proline 961, and glutamate 978–proline 999. Positions arginine 1003–proline 1014 are enriched in basic and acidic residues. Over residues alanine 1087 to proline 1101 the composition is skewed to pro residues. Positions aspartate 1118–lysine 1364 are cleaved as a propeptide — C-terminal propeptide. Residues tyrosine 1131 to lysine 1364 enclose the Fibrillar collagen NC1 domain. 3 cysteine pairs are disulfide-bonded: cysteine 1161–cysteine 1193, cysteine 1201–cysteine 1362, and cysteine 1270–cysteine 1315. Positions 1179, 1181, 1182, 1184, and 1187 each coordinate Ca(2+). An N-linked (GlcNAc...) asparagine glycan is attached at asparagine 1265.

Belongs to the fibrillar collagen family. Trimers of one alpha 2(I) and two alpha 1(I) chains. Interacts (via C-terminus) with TMEM131 (via PapD-L domain); the interaction is direct and is involved in assembly and TRAPPIII ER-to-Golgi transport complex-dependent secretion of collagen. Post-translationally, prolines at the third position of the tripeptide repeating unit (G-X-Y) are hydroxylated in some or all of the chains. Forms the fibrils of tendon, ligaments and bones. In bones the fibrils are mineralized with calcium hydroxyapatite.

The protein resides in the secreted. It localises to the extracellular space. It is found in the extracellular matrix. Its function is as follows. Type I collagen is a member of group I collagen (fibrillar forming collagen). This is Collagen alpha-2(I) chain (COL1A2) from Bos taurus (Bovine).